The chain runs to 153 residues: MLEKLMGADSLQLFRSRYTLGKIYFIGFQRSILLSKSENSLNSIAKETEEGRETVTRKEGWKRRHEDGYLEMAQRHLQRSLCPWVSYLPQPYAELEEVSSHVGKVFMARNYEFLAYEASKDRRQPLERMWTCNYNQQKDQSCNHKEITSTKAE.

The interval 1–25 (MLEKLMGADSLQLFRSRYTLGKIYF) is involved in targeting to the mitochondrion. The segment at 138–153 (KDQSCNHKEITSTKAE) is interaction with DAO.

In terms of assembly, interacts with DAO (D-amino acid oxidase); the interaction is direct, can occur in the presence or absence of FAD or substrate bound to DAO, and results in a complex containing two DAO homodimers and two DAOA monomers. Interacts with DDO (D-aspartate oxidase); the interaction is direct. Interacts wih SOD1; the interaction is direct. Interacts with MSRB2; the interaction is direct. In terms of tissue distribution, expressed in the amygdala and in astrocytes of the cortex (at protein level). Expressed in the caudate nucleus, spinal cord and testis.

It localises to the cytoplasm. It is found in the cytosol. Its subcellular location is the golgi apparatus. The protein resides in the mitochondrion. Its function is as follows. May suppress DAO (D-amino acid oxidase) and SOD1 activity and promote their degradation. Has conversely also been suggested to function as a DAO activator. May stimulate the degradation of DDO (D-aspartate oxidase). May play a role in mitochondrial fission. The sequence is that of D-amino acid oxidase regulator (DAOA) from Homo sapiens (Human).